Consider the following 171-residue polypeptide: uncharacterized protein (171 aa).

This is an uncharacterized protein from Haemophilus influenzae (strain ATCC 51907 / DSM 11121 / KW20 / Rd).